The following is a 468-amino-acid chain: Siroheme synthase 3 (468 aa).

A precorrin-2 dehydrogenase /sirohydrochlorin ferrochelatase region spans residues 1-204 (MDYLPIFCRL…GDSASANQLA (204 aa)). NAD(+)-binding positions include 22-23 (EV) and 43-44 (PE). The residue at position 128 (Ser-128) is a Phosphoserine. The tract at residues 216–468 (GEVVLVGAGP…GAADAALASA (253 aa)) is uroporphyrinogen-III C-methyltransferase. Pro-225 is a binding site for S-adenosyl-L-methionine. Catalysis depends on Asp-248, which acts as the Proton acceptor. Lys-270 functions as the Proton donor in the catalytic mechanism. S-adenosyl-L-methionine contacts are provided by residues 301 to 303 (GGD), Ile-306, 331 to 332 (TA), Met-383, and Gly-412.

It in the N-terminal section; belongs to the precorrin-2 dehydrogenase / sirohydrochlorin ferrochelatase family. This sequence in the C-terminal section; belongs to the precorrin methyltransferase family.

It catalyses the reaction uroporphyrinogen III + 2 S-adenosyl-L-methionine = precorrin-2 + 2 S-adenosyl-L-homocysteine + H(+). The catalysed reaction is precorrin-2 + NAD(+) = sirohydrochlorin + NADH + 2 H(+). The enzyme catalyses siroheme + 2 H(+) = sirohydrochlorin + Fe(2+). It participates in cofactor biosynthesis; adenosylcobalamin biosynthesis; precorrin-2 from uroporphyrinogen III: step 1/1. It functions in the pathway cofactor biosynthesis; adenosylcobalamin biosynthesis; sirohydrochlorin from precorrin-2: step 1/1. The protein operates within porphyrin-containing compound metabolism; siroheme biosynthesis; precorrin-2 from uroporphyrinogen III: step 1/1. Its pathway is porphyrin-containing compound metabolism; siroheme biosynthesis; siroheme from sirohydrochlorin: step 1/1. It participates in porphyrin-containing compound metabolism; siroheme biosynthesis; sirohydrochlorin from precorrin-2: step 1/1. In terms of biological role, multifunctional enzyme that catalyzes the SAM-dependent methylations of uroporphyrinogen III at position C-2 and C-7 to form precorrin-2 via precorrin-1. Then it catalyzes the NAD-dependent ring dehydrogenation of precorrin-2 to yield sirohydrochlorin. Finally, it catalyzes the ferrochelation of sirohydrochlorin to yield siroheme. The polypeptide is Siroheme synthase 3 (Aeromonas hydrophila subsp. hydrophila (strain ATCC 7966 / DSM 30187 / BCRC 13018 / CCUG 14551 / JCM 1027 / KCTC 2358 / NCIMB 9240 / NCTC 8049)).